The chain runs to 353 residues: MTAILERRESESLWGRFCNWITSTENRLYIGWFGVLMIPTLLTATSVFIIAFIAAPPVDIDGIREPVSGSLLYGNNIISGAIIPTSAAIGLHFYPIWEAASVDEWLYNGGPYELIVLHFLLGVACYMGREWELSFRLGMRPWIAVAYSAPVAAATAVFLIYPIGQGSFSDGMPLGISGTFNFMIVFQAEHNILMHPFHMLGVAGVFGGSLFSAMHGSLVTSSLIRETTENESANEGYRFGQEEETYNIVAAHGYFGRLIFQYASFNNSRSLHFFLAAWPVVGIWFTALGISTMAFNLNGFNFNQSVVDSQGRVINTWADIINRANLGMEVMHERNAHNFPLDLAAVESPSING.

Thr2 is modified (N-acetylthreonine). Phosphothreonine is present on Thr2. 3 helical membrane-spanning segments follow: residues 29–46 (YIGW…TATS), 118–133 (HFLL…EWEL), and 142–156 (WIAV…AATA). His118 lines the chlorophyll a pocket. Pheophytin a is bound at residue Tyr126. [CaMn4O5] cluster contacts are provided by Asp170 and Glu189. A helical membrane pass occupies residues 197–218 (FHMLGVAGVFGGSLFSAMHGSL). Position 198 (His198) interacts with chlorophyll a. A quinone is bound by residues His215 and 264-265 (SF). His215 is a binding site for Fe cation. His272 is a Fe cation binding site. Residues 274-288 (FLAAWPVVGIWFTAL) traverse the membrane as a helical segment. His332, Glu333, Asp342, and Ala344 together coordinate [CaMn4O5] cluster. The propeptide occupies 345-353 (AVESPSING).

Belongs to the reaction center PufL/M/PsbA/D family. As to quaternary structure, PSII is composed of 1 copy each of membrane proteins PsbA, PsbB, PsbC, PsbD, PsbE, PsbF, PsbH, PsbI, PsbJ, PsbK, PsbL, PsbM, PsbT, PsbX, PsbY, PsbZ, Psb30/Ycf12, at least 3 peripheral proteins of the oxygen-evolving complex and a large number of cofactors. It forms dimeric complexes. The D1/D2 heterodimer binds P680, chlorophylls that are the primary electron donor of PSII, and subsequent electron acceptors. It shares a non-heme iron and each subunit binds pheophytin, quinone, additional chlorophylls, carotenoids and lipids. D1 provides most of the ligands for the Mn4-Ca-O5 cluster of the oxygen-evolving complex (OEC). There is also a Cl(-1) ion associated with D1 and D2, which is required for oxygen evolution. The PSII complex binds additional chlorophylls, carotenoids and specific lipids. is required as a cofactor. In terms of processing, tyr-161 forms a radical intermediate that is referred to as redox-active TyrZ, YZ or Y-Z. C-terminally processed by CTPA; processing is essential to allow assembly of the oxygen-evolving complex and thus photosynthetic growth.

The protein resides in the plastid. It is found in the chloroplast thylakoid membrane. It carries out the reaction 2 a plastoquinone + 4 hnu + 2 H2O = 2 a plastoquinol + O2. Functionally, photosystem II (PSII) is a light-driven water:plastoquinone oxidoreductase that uses light energy to abstract electrons from H(2)O, generating O(2) and a proton gradient subsequently used for ATP formation. It consists of a core antenna complex that captures photons, and an electron transfer chain that converts photonic excitation into a charge separation. The D1/D2 (PsbA/PsbD) reaction center heterodimer binds P680, the primary electron donor of PSII as well as several subsequent electron acceptors. In Sinapis alba (White mustard), this protein is Photosystem II protein D1.